We begin with the raw amino-acid sequence, 61 residues long: Double gene block protein 1 (61 aa).

Residues 15-45 are disordered; sequence LAGNRGKQKTRRSVAKDAIRKPASDSTNGGN. The interval 17–35 is RNA-binding; the sequence is GNRGKQKTRRSVAKDAIRK. The span at 28 to 37 shows a compositional bias: basic and acidic residues; it reads VAKDAIRKPA.

Belongs to the carmovirus double gene block protein 1 family. As to quaternary structure, homodimer.

Functionally, cell-to-cell movement. Displays RNA-binding activity. This chain is Double gene block protein 1, found in Carnation mottle virus (isolate China/Shanghai) (CarMV).